A 687-amino-acid chain; its full sequence is Methionine--tRNA ligase (687 aa).

The 'HIGH' region signature appears at 14-24 (PYANGYIHLGH). Residues C145, C148, C158, and C161 each contribute to the Zn(2+) site. The 'KMSKS' region motif lies at 329-333 (KMSKS). K332 contributes to the ATP binding site. One can recognise a tRNA-binding domain in the interval 585-687 (DFDKVDLRIG…DGAQVGQRVK (103 aa)).

It belongs to the class-I aminoacyl-tRNA synthetase family. MetG type 1 subfamily. Homodimer. It depends on Zn(2+) as a cofactor.

It is found in the cytoplasm. The enzyme catalyses tRNA(Met) + L-methionine + ATP = L-methionyl-tRNA(Met) + AMP + diphosphate. Is required not only for elongation of protein synthesis but also for the initiation of all mRNA translation through initiator tRNA(fMet) aminoacylation. The chain is Methionine--tRNA ligase from Bdellovibrio bacteriovorus (strain ATCC 15356 / DSM 50701 / NCIMB 9529 / HD100).